A 319-amino-acid chain; its full sequence is Ubiquinone biosynthesis protein COQ4, mitochondrial (319 aa).

Residues 1-28 (MISRSIFSKSVSLQRSQNRSFLLTAASA) constitute a mitochondrion transit peptide. Zn(2+)-binding residues include His-205, Asp-206, His-209, and Glu-221.

This sequence belongs to the COQ4 family. Component of a multi-subunit COQ enzyme complex, composed of at least COQ3, COQ4, COQ5, COQ6, COQ7 and COQ9. Zn(2+) serves as cofactor.

It localises to the mitochondrion inner membrane. It carries out the reaction a 4-hydroxy-3-methoxy-5-(all-trans-polyprenyl)benzoate + H(+) = a 2-methoxy-6-(all-trans-polyprenyl)phenol + CO2. It participates in cofactor biosynthesis; ubiquinone biosynthesis. Its function is as follows. Lyase that catalyzes the C1-decarboxylation of 4-hydroxy-3-methoxy-5-(all-trans-polyprenyl)benzoic acid into 2-methoxy-6-(all-trans-polyprenyl)phenol during ubiquinone biosynthesis. The polypeptide is Ubiquinone biosynthesis protein COQ4, mitochondrial (Clavispora lusitaniae (strain ATCC 42720) (Yeast)).